Here is a 292-residue protein sequence, read N- to C-terminus: Ribosomal RNA small subunit methyltransferase A (292 aa).

6 residues coordinate S-adenosyl-L-methionine: N29, L31, G56, E77, D102, and N127.

The protein belongs to the class I-like SAM-binding methyltransferase superfamily. rRNA adenine N(6)-methyltransferase family. RsmA subfamily.

The protein resides in the cytoplasm. It carries out the reaction adenosine(1518)/adenosine(1519) in 16S rRNA + 4 S-adenosyl-L-methionine = N(6)-dimethyladenosine(1518)/N(6)-dimethyladenosine(1519) in 16S rRNA + 4 S-adenosyl-L-homocysteine + 4 H(+). In terms of biological role, specifically dimethylates two adjacent adenosines (A1518 and A1519) in the loop of a conserved hairpin near the 3'-end of 16S rRNA in the 30S particle. May play a critical role in biogenesis of 30S subunits. This Bacillus pumilus (strain SAFR-032) protein is Ribosomal RNA small subunit methyltransferase A.